The chain runs to 55 residues: ATP synthase F(0) complex subunit 8 (55 aa).

A helical membrane pass occupies residues 4-24; that stretch reads LNPSPWFIILLFSWVIFMVIL.

This sequence belongs to the ATPase protein 8 family. In terms of assembly, component of the ATP synthase complex composed at least of ATP5F1A/subunit alpha, ATP5F1B/subunit beta, ATP5MC1/subunit c (homooctomer), MT-ATP6/subunit a, MT-ATP8/subunit 8, ATP5ME/subunit e, ATP5MF/subunit f, ATP5MG/subunit g, ATP5MK/subunit k, ATP5MJ/subunit j, ATP5F1C/subunit gamma, ATP5F1D/subunit delta, ATP5F1E/subunit epsilon, ATP5PF/subunit F6, ATP5PB/subunit b, ATP5PD/subunit d, ATP5PO/subunit OSCP. ATP synthase complex consists of a soluble F(1) head domain (subunits alpha(3) and beta(3)) - the catalytic core - and a membrane F(0) domain - the membrane proton channel (subunits c, a, 8, e, f, g, k and j). These two domains are linked by a central stalk (subunits gamma, delta, and epsilon) rotating inside the F1 region and a stationary peripheral stalk (subunits F6, b, d, and OSCP).

The protein resides in the mitochondrion membrane. Its function is as follows. Subunit 8, of the mitochondrial membrane ATP synthase complex (F(1)F(0) ATP synthase or Complex V) that produces ATP from ADP in the presence of a proton gradient across the membrane which is generated by electron transport complexes of the respiratory chain. ATP synthase complex consist of a soluble F(1) head domain - the catalytic core - and a membrane F(1) domain - the membrane proton channel. These two domains are linked by a central stalk rotating inside the F(1) region and a stationary peripheral stalk. During catalysis, ATP synthesis in the catalytic domain of F(1) is coupled via a rotary mechanism of the central stalk subunits to proton translocation. In vivo, can only synthesize ATP although its ATP hydrolase activity can be activated artificially in vitro. Part of the complex F(0) domain. The protein is ATP synthase F(0) complex subunit 8 of Scyliorhinus canicula (Small-spotted catshark).